Consider the following 57-residue polypeptide: Small ribosomal subunit protein bS21 (57 aa).

It belongs to the bacterial ribosomal protein bS21 family.

This chain is Small ribosomal subunit protein bS21, found in Bacillus pumilus (strain SAFR-032).